We begin with the raw amino-acid sequence, 1173 residues long: Ubiquitin conjugation factor E4 B (1173 aa).

The residue at position 1 (Met1) is an N-acetylmethionine. The tract at residues 1-155 is disordered; that stretch reads MEELSADEIR…EPSSGPEVSE (155 aa). The span at 16-33 shows a compositional bias: low complexity; sequence RLAGGQTSQPTTPLTSPQ. Residues Ser23 and Ser31 each carry the phosphoserine modification. The segment covering 51–64 has biased composition (polar residues); that stretch reads QSLGLNVHNMTPAT. Residues 76-99 are compositionally biased toward low complexity; it reads SQSSEGVSSLSSSPSNSLETQSQS. Ser84, Ser88, Ser90, Ser101, Ser103, Ser105, and Ser124 each carry phosphoserine. Residues 134-147 are compositionally biased toward basic and acidic residues; sequence NDRREKRSLSDKEP. 3 positions are modified to phosphoserine: Ser238, Ser674, and Ser840. The interval 928 to 948 is disordered; that stretch reads NKEQWDQLPRDQQQARQSQLA. Residues 937 to 948 are compositionally biased toward low complexity; it reads RDQQQARQSQLA. Residues 1098–1171 enclose the U-box domain; sequence DAPDEFRDPL…QAWMREKQSS (74 aa). Ser1136 carries the phosphoserine modification.

It belongs to the ubiquitin conjugation factor E4 family. In terms of assembly, interacts with VCP. Interacts with STUB1/CHIP and UNC45B. In terms of processing, proteolytically cleaved by caspases during apoptosis. Cleaved efficiently at Asp-123 by caspase-6 and granzyme B. Cleaved with approximately 10-fold less efficiency at Asp-109 by caspase-3 and caspase-7. Expressed predominantly in neuronal tissues. Also detected in liver, heart, brain, kidney and testis.

The protein localises to the cytoplasm. It localises to the nucleus. The catalysed reaction is S-ubiquitinyl-[E2 ubiquitin-conjugating enzyme]-L-cysteine + [acceptor protein]-L-lysine = [E2 ubiquitin-conjugating enzyme]-L-cysteine + N(6)-ubiquitinyl-[acceptor protein]-L-lysine.. It participates in protein modification; protein ubiquitination. Functionally, ubiquitin-protein ligase that probably functions as an E3 ligase in conjunction with specific E1 and E2 ligases. May also function as an E4 ligase mediating the assembly of polyubiquitin chains on substrates ubiquitinated by another E3 ubiquitin ligase. May regulate myosin assembly in striated muscles together with STUB1 and VCP/p97 by targeting myosin chaperone UNC45B for proteasomal degradation. This Mus musculus (Mouse) protein is Ubiquitin conjugation factor E4 B.